Reading from the N-terminus, the 146-residue chain is Large ribosomal subunit protein bL9 (146 aa).

It belongs to the bacterial ribosomal protein bL9 family.

Functionally, binds to the 23S rRNA. This chain is Large ribosomal subunit protein bL9, found in Flavobacterium johnsoniae (strain ATCC 17061 / DSM 2064 / JCM 8514 / BCRC 14874 / CCUG 350202 / NBRC 14942 / NCIMB 11054 / UW101) (Cytophaga johnsonae).